A 483-amino-acid polypeptide reads, in one-letter code: Regulatory protein ViaA (483 aa).

The protein belongs to the ViaA family. As to quaternary structure, homodimer. Interacts with RavA.

The protein resides in the cytoplasm. In terms of biological role, component of the RavA-ViaA chaperone complex, which may act on the membrane to optimize the function of some of the respiratory chains. ViaA stimulates the ATPase activity of RavA. The protein is Regulatory protein ViaA of Escherichia coli O139:H28 (strain E24377A / ETEC).